The chain runs to 73 residues: Beta-defensin 50 (73 aa).

A signal peptide spans 1–23; the sequence is MKTLCFLLLTSGLLYLMVKGVGS. Intrachain disulfides connect Cys-34/Cys-63 and Cys-46/Cys-64.

It belongs to the beta-defensin family. As to expression, highly expressed in prostate. Not expressed in uterus, epididymis, ovary, testis, spleen, submaxillary gland, thymus, thyroid, pancreas, smooth muscle, skeletal muscle, heart, kidney, lung, liver, eye and brain.

The protein resides in the secreted. Functionally, has bactericidal activity. The polypeptide is Beta-defensin 50 (Defb50) (Mus musculus (Mouse)).